A 412-amino-acid polypeptide reads, in one-letter code: Alanyl-tRNA editing protein Aarsd1 (412 aa).

Residues His109 and His113 each coordinate Zn(2+). At Ser174 the chain carries Phosphoserine. Positions 209 and 213 each coordinate Zn(2+).

It belongs to the class-II aminoacyl-tRNA synthetase family. Alax-L subfamily. It depends on Zn(2+) as a cofactor.

It localises to the cytoplasm. Functionally, functions in trans to edit the amino acid moiety from incorrectly charged tRNA(Ala). The polypeptide is Alanyl-tRNA editing protein Aarsd1 (AARSD1) (Homo sapiens (Human)).